Consider the following 708-residue polypeptide: MLRSIFDFNQRSTKMVMISHKLDLILVFIIVIGGSIFRRVSANFTVPCNGRCGGLTLPYPFGFSNGCSIRFDCSAAEKPMIGDFSVQNVTENSIFVGLSHNCTRKIEDMNPLFGENFAPTSENSFLMENCNRTTDGCSIKQKFLENVLKLKSCDATGNISCFSLDSNSSSKNSAKFFSMKTLRNSSCSLLFSSIAFESVGVNAGIALEFERVRLGWWLKGGCESGTCAANTDCTDVETPHGYAGHRCSCLDGFHGDGYTNPCQRALPECRGSKLVWRHCRSNLITIVGGTVGGAFLLAALAFFFFCKRRRSTPLRSHLSAKRLLSEAAGNSSVAFFPYKEIEKATDGFSEKQKLGIGAYGTVYRGKLQNDEWVAIKRLRHRDSESLDQVMNEIKLLSSVSHPNLVRLLGCCIEQGDPVLVYEYMPNGTLSEHLQRDRGSGLPWTLRLTVATQTAKAIAYLHSSMNPPIYHRDIKSTNILLDYDFNSKVADFGLSRLGMTESSHISTAPQGTPGYLDPQYHQCFHLSDKSDVYSFGVVLAEIITGLKVVDFTRPHTEINLAALAVDKIGSGCIDEIIDPILDLDLDAWTLSSIHTVAELAFRCLAFHSDMRPTMTEVADELEQIRLSGWIPSMSLDSPAGSLRSSDRGSERSVKQSSIGSRRVVIPQKQPDCLASVEEISDSSPISVQDPWLSAQSSPSTNTLLGNIPR.

The first 42 residues, Met1–Ala42, serve as a signal peptide directing secretion. Asn43, Asn88, Asn101, Asn131, Asn158, Asn167, and Asn184 each carry an N-linked (GlcNAc...) asparagine glycan. Topologically, residues Asn43–Thr285 are extracellular. Residues Ile286–Cys306 traverse the membrane as a helical segment. The Cytoplasmic portion of the chain corresponds to Lys307 to Arg708. The region spanning Phe348–Ile629 is the Protein kinase domain. Residues Leu354–Val362 and Lys376 contribute to the ATP site. Asp472 serves as the catalytic Proton acceptor. Disordered regions lie at residues Ser636–Ser659 and Val686–Arg708. Residues Ser643–Val652 show a composition bias toward basic and acidic residues. Over residues Ser692–Arg708 the composition is skewed to polar residues.

This sequence belongs to the protein kinase superfamily. Ser/Thr protein kinase family.

It is found in the membrane. It catalyses the reaction L-seryl-[protein] + ATP = O-phospho-L-seryl-[protein] + ADP + H(+). It carries out the reaction L-threonyl-[protein] + ATP = O-phospho-L-threonyl-[protein] + ADP + H(+). Serine/threonine-protein kinase that may function as a signaling receptor of extracellular matrix component. The chain is Wall-associated receptor kinase-like 14 (WAKL14) from Arabidopsis thaliana (Mouse-ear cress).